Here is a 359-residue protein sequence, read N- to C-terminus: DNA integrity scanning protein DisA (359 aa).

Positions 10–148 (ELDLLDIVQF…GNRRYTLKDI (139 aa)) constitute a DAC domain. ATP-binding positions include Gly77, Leu95, and 108–112 (MRHRT).

Belongs to the DisA family. Homooctamer. It depends on Mg(2+) as a cofactor.

It carries out the reaction 2 ATP = 3',3'-c-di-AMP + 2 diphosphate. Participates in a DNA-damage check-point that is active prior to asymmetric division when DNA is damaged. DisA forms globular foci that rapidly scan along the chromosomes during sporulation, searching for lesions. When a lesion is present, DisA pauses at the lesion site. This triggers a cellular response that culminates in a temporary block in sporulation initiation. Its function is as follows. Also has diadenylate cyclase activity, catalyzing the condensation of 2 ATP molecules into cyclic di-AMP (c-di-AMP). c-di-AMP acts as a signaling molecule that couples DNA integrity with progression of sporulation. The rise in c-di-AMP level generated by DisA while scanning the chromosome, operates as a positive signal that advances sporulation; upon encountering a lesion, the DisA focus arrests at the damaged site and halts c-di-AMP synthesis. The chain is DNA integrity scanning protein DisA from Bacillus pumilus (strain SAFR-032).